The chain runs to 509 residues: Cytochrome P450 6A1 (509 aa).

Cys449 serves as a coordination point for heme.

The protein belongs to the cytochrome P450 family. Heme is required as a cofactor.

The protein resides in the endoplasmic reticulum membrane. The protein localises to the microsome membrane. The enzyme catalyses an organic molecule + reduced [NADPH--hemoprotein reductase] + O2 = an alcohol + oxidized [NADPH--hemoprotein reductase] + H2O + H(+). Its function is as follows. Involved in the metabolism of insect hormones and in the breakdown of synthetic insecticides. The chain is Cytochrome P450 6A1 (CYP6A1) from Musca domestica (House fly).